We begin with the raw amino-acid sequence, 217 residues long: Adenylate kinase (217 aa).

ATP is bound at residue 10 to 15 (GAGKGT). Positions 30–59 (STGDMFREAIKRGTPLGRQAEVYIKGGRLV) are NMP. AMP contacts are provided by residues T31, R36, 57-59 (RLV), 85-88 (GFPR), and Q92. The interval 126 to 163 (GRRVCRQCGATYHVRYNPPAVPGKCDACGQDLVQRADD) is LID. ATP is bound at residue R127. 2 residues coordinate Zn(2+): C130 and C133. 136–137 (TY) lines the ATP pocket. C150 and C153 together coordinate Zn(2+). Residues R160 and R171 each contribute to the AMP site. Q199 is a binding site for ATP.

Belongs to the adenylate kinase family. In terms of assembly, monomer.

Its subcellular location is the cytoplasm. It catalyses the reaction AMP + ATP = 2 ADP. It participates in purine metabolism; AMP biosynthesis via salvage pathway; AMP from ADP: step 1/1. Its function is as follows. Catalyzes the reversible transfer of the terminal phosphate group between ATP and AMP. Plays an important role in cellular energy homeostasis and in adenine nucleotide metabolism. This Moorella thermoacetica (strain ATCC 39073 / JCM 9320) protein is Adenylate kinase.